Consider the following 28-residue polypeptide: uncharacterized protein (28 aa).

The segment covering 1-18 (MLPRKYKPAYKKQAHRVK) has biased composition (basic residues). The tract at residues 1–28 (MLPRKYKPAYKKQAHRVKSNPQPAYTFQ) is disordered. Residues 19–28 (SNPQPAYTFQ) are compositionally biased toward polar residues.

This is an uncharacterized protein from Saccharomyces cerevisiae (strain ATCC 204508 / S288c) (Baker's yeast).